The primary structure comprises 143 residues: Large ribosomal subunit protein uL11 (143 aa).

This sequence belongs to the universal ribosomal protein uL11 family. Part of the ribosomal stalk of the 50S ribosomal subunit. Interacts with L10 and the large rRNA to form the base of the stalk. L10 forms an elongated spine to which L12 dimers bind in a sequential fashion forming a multimeric L10(L12)X complex. One or more lysine residues are methylated.

Its function is as follows. Forms part of the ribosomal stalk which helps the ribosome interact with GTP-bound translation factors. This Ralstonia nicotianae (strain ATCC BAA-1114 / GMI1000) (Ralstonia solanacearum) protein is Large ribosomal subunit protein uL11.